Here is a 376-residue protein sequence, read N- to C-terminus: N-acetyldiaminopimelate deacetylase (376 aa).

Asp-69 is an active-site residue. Residue Glu-128 is the Proton acceptor of the active site.

It belongs to the peptidase M20A family. N-acetyldiaminopimelate deacetylase subfamily.

It carries out the reaction N-acetyl-(2S,6S)-2,6-diaminopimelate + H2O = (2S,6S)-2,6-diaminopimelate + acetate. It functions in the pathway amino-acid biosynthesis; L-lysine biosynthesis via DAP pathway; LL-2,6-diaminopimelate from (S)-tetrahydrodipicolinate (acetylase route): step 3/3. In terms of biological role, catalyzes the conversion of N-acetyl-diaminopimelate to diaminopimelate and acetate. In Bacillus thuringiensis subsp. konkukian (strain 97-27), this protein is N-acetyldiaminopimelate deacetylase.